Here is a 1020-residue protein sequence, read N- to C-terminus: RNA-binding protein 44 (1020 aa).

Disordered stretches follow at residues 1-23 (MQATAVVETDSDKSYHKNGGHLQ) and 50-70 (DGEGDSLTTDERTNVKENSSV). The segment covering 58–70 (TDERTNVKENSSV) has biased composition (basic and acidic residues). Ser249, Ser371, Ser374, Ser516, Ser683, and Ser690 each carry phosphoserine. The 75-residue stretch at 796–870 (FLIHVGGLCP…KSVNVRLVKI (75 aa)) folds into the RRM domain.

As to quaternary structure, homodimer. Interacts with TEX14.

It is found in the cytoplasm. Functionally, component of intercellular bridges during meiosis. Intercellular bridges are evolutionarily conserved structures that connect differentiating germ cells. Not required for fertility. The polypeptide is RNA-binding protein 44 (Rbm44) (Rattus norvegicus (Rat)).